Here is a 48-residue protein sequence, read N- to C-terminus: Large ribosomal subunit protein bL34c (48 aa).

Belongs to the bacterial ribosomal protein bL34 family.

The protein localises to the plastid. The protein resides in the chloroplast. The chain is Large ribosomal subunit protein bL34c from Thalassiosira pseudonana (Marine diatom).